A 282-amino-acid polypeptide reads, in one-letter code: 4-diphosphocytidyl-2-C-methyl-D-erythritol kinase (282 aa).

Lys9 is an active-site residue. An ATP-binding site is contributed by 98-108 (PMGGGLGGGSS). Residue Asp140 is part of the active site.

Belongs to the GHMP kinase family. IspE subfamily. In terms of assembly, homodimer.

It carries out the reaction 4-CDP-2-C-methyl-D-erythritol + ATP = 4-CDP-2-C-methyl-D-erythritol 2-phosphate + ADP + H(+). Its pathway is isoprenoid biosynthesis; isopentenyl diphosphate biosynthesis via DXP pathway; isopentenyl diphosphate from 1-deoxy-D-xylulose 5-phosphate: step 3/6. In terms of biological role, catalyzes the phosphorylation of the position 2 hydroxy group of 4-diphosphocytidyl-2C-methyl-D-erythritol. The chain is 4-diphosphocytidyl-2-C-methyl-D-erythritol kinase from Salmonella schwarzengrund (strain CVM19633).